We begin with the raw amino-acid sequence, 181 residues long: Germinal center-associated signaling and motility protein (181 aa).

A Phosphoserine modification is found at Ser-102. The segment covering Ala-117–Glu-128 has biased composition (basic and acidic residues). Positions Ala-117 to Gln-181 are disordered. At Tyr-150 the chain carries Phosphotyrosine.

Interacts with ACTB and MYH2; the interaction with MYH2 is increased by IL6-induced phosphorylation. Interacts (via C-terminus) with ARHGEF11 (via DH domain). Interacts with ARHGEF12. Interacts with SYK; the interaction increases after B-cell receptor stimulation, resulting in enhanced SYK autophosphorylation and activity. Post-translationally, phosphorylation on tyrosine residues can be induced by IL6. Phosphorylation is mediated by LYN. Targeted by the ubiquitin E3 ligase subunit FBXO10 to mediate its ubiquitination and degradation. Highly expressed in normal germinal center (GC) B-cells. Expressed in spleen and, to a lesser extent, bone marrow.

It is found in the cytoplasm. The protein localises to the cell membrane. Involved in the negative regulation of lymphocyte motility. It mediates the migration-inhibitory effects of IL6. Serves as a positive regulator of the RhoA signaling pathway. Enhancement of RhoA activation results in inhibition of lymphocyte and lymphoma cell motility by activation of its downstream effector ROCK. Is a regulator of B-cell receptor signaling, that acts through SYK kinase activation. This is Germinal center-associated signaling and motility protein (Gcsam) from Mus musculus (Mouse).